The chain runs to 988 residues: Band 4.1-like protein 2 (988 aa).

Residues 1-190 (MTTEVGSASE…GAAKRETKEV (190 aa)) are disordered. T2 carries the N-acetylthreonine modification. S7 is subject to Phosphoserine. The span at 22–31 (ASKEKAKEVE) shows a compositional bias: basic and acidic residues. Phosphoserine occurs at positions 38, 86, and 116. Basic and acidic residues-rich tracts occupy residues 110-148 (ILGK…EAKP) and 160-190 (EEVR…TKEV). A phosphoserine mark is found at S201, S379, S395, S492, S543, S555, S561, and S582. The 282-residue stretch at 211–492 (VLAKVTLLDG…EHHTFYRLVS (282 aa)) folds into the FERM domain. The hydrophilic stretch occupies residues 495 to 651 (QPPKTKFLTL…TPEPRPSEWE (157 aa)). A disordered region spans residues 514 to 594 (TQAQTREAST…KATPLPAEGK (81 aa)). The span at 555–567 (SPPGEGSVPGPGV) shows a compositional bias: low complexity. The residue at position 606 (Y606) is a Phosphotyrosine. Phosphoserine occurs at positions 610 and 630. Disordered regions lie at residues 639–788 (MAST…QAGA) and 804–839 (QKLP…VPHL). Residues 652 to 837 (KRRVTPLPFQ…DPHRVNGEVP (186 aa)) are spectrin--actin-binding. Basic and acidic residues predominate over residues 673 to 686 (VEEKKRAEVGKDES). Residue S698 is modified to Phosphoserine. Residues 704 to 717 (GETRKVEPVAHKDS) show a composition bias toward basic and acidic residues. Positions 718–729 (TSLSSESSSSSS) are enriched in low complexity. A compositionally biased stretch (basic and acidic residues) spans 739 to 751 (QPHHRVTEGTIRE). T745 carries the phosphothreonine modification. Acidic residues predominate over residues 752-764 (EQEECDEELEEEP). Basic and acidic residues predominate over residues 828 to 839 (DPHRVNGEVPHL). Residues 838–988 (HLDLDGLPEI…ETELAEEGEE (151 aa)) are C-terminal (CTD).

As to quaternary structure, interacts with FCGR1A. Interacts with TRPC4. Interacts (via CTD domain) with FKBP2. Interacts with NUMA1; this interaction is negatively regulated by CDK1 during metaphase and promotes anaphase-specific localization of NUMA1 in symmetrically dividing cells. In terms of tissue distribution, widely expressed.

The protein localises to the cytoplasm. The protein resides in the cytoskeleton. Its subcellular location is the cell cortex. It localises to the cell membrane. Functionally, required for dynein-dynactin complex and NUMA1 recruitment at the mitotic cell cortex during anaphase. The sequence is that of Band 4.1-like protein 2 from Mus musculus (Mouse).